The following is a 621-amino-acid chain: uncharacterized protein (621 aa).

Belongs to the chlamydial CPn_0512/CT_425/TC_0708 family.

This is an uncharacterized protein from Chlamydia muridarum (strain MoPn / Nigg).